A 3081-amino-acid chain; its full sequence is Cilia- and flagella-associated protein 54 (3081 aa).

Disordered regions lie at residues 542–579 (SGTA…AGGA), 591–626 (TQTA…QSSL), 910–942 (PPQP…GARK), 1406–1451 (ADAP…GITP), 1518–1586 (ESIL…YPVV), 1636–1657 (RRAA…EERP), 2176–2210 (GERT…LPEP), 2229–2306 (MASG…SQRA), and 2776–2806 (ARPV…SGDG). Residues 564 to 579 (GGSASPPNGSSGAGGA) show a composition bias toward low complexity. Residues 1428 to 1449 (MPPPVPDPSAAGPPPLTPPEGI) show a composition bias toward pro residues. A compositionally biased stretch (basic and acidic residues) spans 1538 to 1550 (GGKDDKKKDDKAP). Low complexity-rich tracts occupy residues 1638-1648 (AALAASASTAG), 2181-2199 (APKP…AAAA), and 2240-2269 (EPSS…SPTG). Over residues 2289–2301 (PEVPGPPPPPPPS) the composition is skewed to pro residues. Positions 2776 to 2788 (ARPVATSSSGARP) are enriched in low complexity. The segment covering 2796 to 2805 (KPGAGGGSGD) has biased composition (gly residues).

This sequence belongs to the CFAP54 family. As to quaternary structure, part of the PDCP1 complex composed of CFAP46, CFAP54, CFAP74 and CFAP221; the PDCP1 complex binds calmodulin.

The protein resides in the cytoplasm. The protein localises to the cytoskeleton. It is found in the cilium axoneme. The sequence is that of Cilia- and flagella-associated protein 54 from Chlamydomonas reinhardtii (Chlamydomonas smithii).